Consider the following 665-residue polypeptide: MKHNRQMPDESLENIKVLLNPKLGKPVKSLTSAQSKACYHTLISNKNLNKTSDEYEKLLANYILLCDEKYLCKTVIPDSRFWAILCDNCQKLRSETLVANLIRIFNVALKCQDSNKNEVIVSICHISRENSQLIGILLQLLSQRPIHIPLFTDTILCITLFLKCSLTLCETSLSHAVEFVPRILILLFQYNFPASMSELLYIEDLQPLILEEFVPLKQRLINFLSSVSIDDYSCSLKADLLTAIKDNSVFQKGLEMEMGDLPSINLLNAYDTFTFLNSPNGSFKRLYTEQLLFGENDFPLYEAIFKLSDQFRRLFNLSGKKENQYSDSERDLKLQIATAVLNRQTCFYKTLELFLRFWIESLAKSQSDLVSLLNLAIITLKYVCLSSSDLEAAIQTKSLLKTQVVALDSMRYKFARTLQLDSIKKEQYRTWSSSIASFDTMLSGQVRDYVRHQRLLQLQKGTWVYAENPLNPEAGTPKVYFLIVSDNHANLLAREFETQTNDLPYLFDNKILTSPGSEALANGRTKVVVLKHITSFKSIELTTPSRRTSSNVYIKLDEANVYTGVELKDRNDRTVLKFYLDTEEGRYIWLDGLKLISPFQHEDISEDTKEQIDTLFDLRKNVQMINLNVRQDIIVPPPEPSDEDEDEEFYNLETLKKVTQNFYFD.

In terms of assembly, forms an active heterodimer with DCK1.

It localises to the cytoplasm. The protein localises to the mitochondrion. Its function is as follows. Forms a transiant heterodimeric complex with DCK1, that acts as a guanine nucleotide exchange factor (GEF) for the small GTPase RHO5. DCK1, LMO1 and RHO5 relocate to mitochondria upon oxidative stress and trigger cell death. The DCK1/LMO1/RHO5 signaling module mediates mitochondrial turnover under nitrogen starvation conditions via mitophagy. The DCK1/LMO1/RHO5 signaling module also plays a role in cell wall integrity signaling. The chain is ELMO family protein LMO1 from Saccharomyces cerevisiae (strain ATCC 204508 / S288c) (Baker's yeast).